Consider the following 66-residue polypeptide: MPGGDRTGPWGQGPRTGRRAGFCSGYRMPGFMNRSVWPPFGGRWFRWFGRRFWGRRAGRAGRGRWW.

Residues 1 to 21 (MPGGDRTGPWGQGPRTGRRAG) are disordered.

This is an uncharacterized protein from Archaeoglobus fulgidus (strain ATCC 49558 / DSM 4304 / JCM 9628 / NBRC 100126 / VC-16).